We begin with the raw amino-acid sequence, 184 residues long: Large ribosomal subunit protein uL18 (184 aa).

This sequence belongs to the universal ribosomal protein uL18 family. As to quaternary structure, part of the 50S ribosomal subunit. Contacts the 5S and 23S rRNAs.

This is one of the proteins that bind and probably mediate the attachment of the 5S RNA into the large ribosomal subunit, where it forms part of the central protuberance. The sequence is that of Large ribosomal subunit protein uL18 from Natronomonas pharaonis (strain ATCC 35678 / DSM 2160 / CIP 103997 / JCM 8858 / NBRC 14720 / NCIMB 2260 / Gabara) (Halobacterium pharaonis).